The following is a 452-amino-acid chain: GTPase Der (452 aa).

EngA-type G domains follow at residues 4 to 169 (PVVA…PPAA) and 177 to 352 (IKVA…ESHR). GTP contacts are provided by residues 10–17 (GRPNVGKS), 57–61 (DTGGL), 120–123 (NKCE), 183–190 (GRPNVGKS), 230–234 (DTAGI), and 295–298 (NKWD). The region spanning 353-438 (RRVSTSVIND…PIRLIWRGKP (86 aa)) is the KH-like domain.

The protein belongs to the TRAFAC class TrmE-Era-EngA-EngB-Septin-like GTPase superfamily. EngA (Der) GTPase family. As to quaternary structure, associates with the 50S ribosomal subunit.

Its function is as follows. GTPase that plays an essential role in the late steps of ribosome biogenesis. The polypeptide is GTPase Der (Microcystis aeruginosa (strain NIES-843 / IAM M-2473)).